The following is a 377-amino-acid chain: Polar flagellin F (377 aa).

Coiled-coil stretches lie at residues 98–131 (QSAN…ETTS) and 302–339 (DSQR…IQDT).

Belongs to the bacterial flagellin family. Heteromer of multiple flagellin subunits including FlaA, FlaB/D, FlaC, FlaE and FlaF.

The protein resides in the secreted. It localises to the bacterial flagellum. Its function is as follows. Flagellin is the subunit protein which polymerizes to form the filaments of bacterial flagella. This Vibrio parahaemolyticus serotype O3:K6 (strain RIMD 2210633) protein is Polar flagellin F (flaF).